The primary structure comprises 328 residues: Aspartate carbamoyltransferase catalytic subunit (328 aa).

Arg-55 and Thr-56 together coordinate carbamoyl phosphate. Lys-83 contacts L-aspartate. Carbamoyl phosphate contacts are provided by Arg-105, His-135, and Gln-138. Residues Arg-176 and Arg-230 each coordinate L-aspartate. Carbamoyl phosphate is bound by residues Gly-271 and Pro-272.

It belongs to the aspartate/ornithine carbamoyltransferase superfamily. ATCase family. In terms of assembly, heterododecamer (2C3:3R2) of six catalytic PyrB chains organized as two trimers (C3), and six regulatory PyrI chains organized as three dimers (R2).

The catalysed reaction is carbamoyl phosphate + L-aspartate = N-carbamoyl-L-aspartate + phosphate + H(+). The protein operates within pyrimidine metabolism; UMP biosynthesis via de novo pathway; (S)-dihydroorotate from bicarbonate: step 2/3. Its function is as follows. Catalyzes the condensation of carbamoyl phosphate and aspartate to form carbamoyl aspartate and inorganic phosphate, the committed step in the de novo pyrimidine nucleotide biosynthesis pathway. This Streptomyces griseus subsp. griseus (strain JCM 4626 / CBS 651.72 / NBRC 13350 / KCC S-0626 / ISP 5235) protein is Aspartate carbamoyltransferase catalytic subunit.